Reading from the N-terminus, the 117-residue chain is Immunoglobulin lambda variable 6-57 (117 aa).

Residues 1 to 19 (MAWAPLLLTLLAHCTGSWA) form the signal peptide. The framework-1 stretch occupies residues 20–44 (NFMLTQPHSVSESPGKTVTISCTGS). An Ig-like domain is found at 20–117 (NFMLTQPHSV…YYCQSYDSSN (98 aa)). Cysteines 41 and 110 form a disulfide. The tract at residues 45 to 52 (SGSIASNY) is complementarity-determining-1. The interval 53–69 (VQWYQQRPGSAPTTVIY) is framework-2. A disordered region spans residues 65–97 (TTVIYEDNQRPSGVPDRFSGSIDSSSNSASLTI). The complementarity-determining-2 stretch occupies residues 70-72 (EDN). Positions 73-110 (QRPSGVPDRFSGSIDSSSNSASLTISGLKTEDEADYYC) are framework-3. The segment covering 83-97 (SGSIDSSSNSASLTI) has biased composition (low complexity). The interval 111 to 117 (QSYDSSN) is complementarity-determining-3.

Immunoglobulins are composed of two identical heavy chains and two identical light chains; disulfide-linked.

It localises to the secreted. The protein localises to the cell membrane. Its function is as follows. V region of the variable domain of immunoglobulin light chains that participates in the antigen recognition. Immunoglobulins, also known as antibodies, are membrane-bound or secreted glycoproteins produced by B lymphocytes. In the recognition phase of humoral immunity, the membrane-bound immunoglobulins serve as receptors which, upon binding of a specific antigen, trigger the clonal expansion and differentiation of B lymphocytes into immunoglobulins-secreting plasma cells. Secreted immunoglobulins mediate the effector phase of humoral immunity, which results in the elimination of bound antigens. The antigen binding site is formed by the variable domain of one heavy chain, together with that of its associated light chain. Thus, each immunoglobulin has two antigen binding sites with remarkable affinity for a particular antigen. The variable domains are assembled by a process called V-(D)-J rearrangement and can then be subjected to somatic hypermutations which, after exposure to antigen and selection, allow affinity maturation for a particular antigen. The polypeptide is Immunoglobulin lambda variable 6-57 (Homo sapiens (Human)).